We begin with the raw amino-acid sequence, 420 residues long: Transcriptional adapter 2-beta (420 aa).

The ZZ-type zinc finger occupies 4 to 59 (LSKKYCVYCLADVTSLRLRCTECQDIELCTDCFSAGAEIGNHRRWHGYQLVDGGRF). 8 residues coordinate Zn(2+): Cys-9, Cys-12, Cys-23, Cys-26, Cys-32, Cys-35, His-45, and His-49. Residues 65-118 (EAEGGWTSREEQLLLDAIEQFGFGNWEDMAAHVGASRTPTEVMEHYVTMYIHGN) form the SANT domain. The segment at 303–333 (EESAEYEAARHKREKRKENKNIANSKRGRED) is disordered.

It is found in the nucleus. Transcriptional coactivator. In Xenopus laevis (African clawed frog), this protein is Transcriptional adapter 2-beta (tada2b).